A 244-amino-acid polypeptide reads, in one-letter code: Probable transcriptional regulatory protein TT_C0469 (244 aa).

This sequence belongs to the TACO1 family.

The protein resides in the cytoplasm. This chain is Probable transcriptional regulatory protein TT_C0469, found in Thermus thermophilus (strain ATCC BAA-163 / DSM 7039 / HB27).